Reading from the N-terminus, the 808-residue chain is N-terminal kinase-like protein (808 aa).

The region spanning 14-314 (FELIPEPPEG…PEDFCRHKVL (301 aa)) is the Protein kinase domain. HEAT repeat units follow at residues 350 to 388 (IIPV…VNTQ), 389 to 427 (IFPH…LNVE), and 507 to 545 (ILPV…EDPT). 3 disordered regions span residues 540-566 (VSED…GGAA), 587-646 (SHPT…RWDD), and 658-808 (SVLA…RKLD). A compositionally biased stretch (low complexity) spans 556 to 566 (AASSPGMGGAA). The segment covering 587–600 (SHPTTAPTETNIPQ) has biased composition (polar residues). The segment covering 601-617 (RPTPEGVPAPAPTPVPA) has biased composition (pro residues). The segment covering 660-680 (LAQQDDWSTGGQVSRASQVSN) has biased composition (polar residues). The segment covering 681–690 (SDHKSSKSPE) has biased composition (basic and acidic residues). S754 is modified (phosphoserine). The segment covering 755-764 (WGEDNWEGLE) has biased composition (acidic residues). A coiled-coil region spans residues 761 to 797 (EGLETDSRQVKAELARKKREERRREMEAKRAERKVAK). Composition is skewed to basic and acidic residues over residues 765 to 775 (TDSRQVKAELA) and 782 to 795 (RRRE…ERKV). The tract at residues 793 to 808 (RKVAKGPMKLGARKLD) is interaction with COPB1.

It belongs to the protein kinase superfamily. Interacts with GORAB. Interacts with COPA, COPB1 and COPB2. Homooligomer. Interacts with AP2B1. As to expression, ubiquitous.

Its subcellular location is the cytoplasm. The protein resides in the cytoskeleton. It localises to the microtubule organizing center. It is found in the centrosome. The protein localises to the endoplasmic reticulum-Golgi intermediate compartment. Its subcellular location is the golgi apparatus. The protein resides in the cis-Golgi network. It localises to the nucleus. Functionally, regulates COPI-mediated retrograde protein traffic at the interface between the Golgi apparatus and the endoplasmic reticulum. Involved in the maintenance of the Golgi apparatus morphology. In terms of biological role, acts as a transcriptional activator. It binds to three different types of GC-rich DNA binding sites (box-A, -B and -C) in the beta-polymerase promoter region. It also binds to the TERT promoter region. This is N-terminal kinase-like protein (SCYL1) from Homo sapiens (Human).